The chain runs to 483 residues: Aspartyl/glutamyl-tRNA(Asn/Gln) amidotransferase subunit B (483 aa).

The protein belongs to the GatB/GatE family. GatB subfamily. As to quaternary structure, heterotrimer of A, B and C subunits.

It catalyses the reaction L-glutamyl-tRNA(Gln) + L-glutamine + ATP + H2O = L-glutaminyl-tRNA(Gln) + L-glutamate + ADP + phosphate + H(+). The enzyme catalyses L-aspartyl-tRNA(Asn) + L-glutamine + ATP + H2O = L-asparaginyl-tRNA(Asn) + L-glutamate + ADP + phosphate + 2 H(+). Allows the formation of correctly charged Asn-tRNA(Asn) or Gln-tRNA(Gln) through the transamidation of misacylated Asp-tRNA(Asn) or Glu-tRNA(Gln) in organisms which lack either or both of asparaginyl-tRNA or glutaminyl-tRNA synthetases. The reaction takes place in the presence of glutamine and ATP through an activated phospho-Asp-tRNA(Asn) or phospho-Glu-tRNA(Gln). The polypeptide is Aspartyl/glutamyl-tRNA(Asn/Gln) amidotransferase subunit B (Rickettsia rickettsii (strain Iowa)).